A 128-amino-acid chain; its full sequence is Ribonuclease P protein component 4 (128 aa).

Cys-63, Cys-66, Cys-92, and Cys-95 together coordinate Zn(2+).

Belongs to the eukaryotic/archaeal RNase P protein component 4 family. In terms of assembly, consists of a catalytic RNA component and at least 4 protein subunits. Forms a subcomplex with Rnp1 which stimulates the catalytic RNA. Zn(2+) serves as cofactor.

Its subcellular location is the cytoplasm. It catalyses the reaction Endonucleolytic cleavage of RNA, removing 5'-extranucleotides from tRNA precursor.. Part of ribonuclease P, a protein complex that generates mature tRNA molecules by cleaving their 5'-ends. The sequence is that of Ribonuclease P protein component 4 from Methanocaldococcus jannaschii (strain ATCC 43067 / DSM 2661 / JAL-1 / JCM 10045 / NBRC 100440) (Methanococcus jannaschii).